The following is a 118-amino-acid chain: Heavy metal-associated isoprenylated plant protein 47 (118 aa).

In terms of domain architecture, HMA spans 1 to 67; that stretch reads MRIKLSVNSE…KACHVTLETL (67 aa). The residue at position 115 (Cys115) is a Cysteine methyl ester. Residue Cys115 is the site of S-farnesyl cysteine attachment. The propeptide at 116 to 118 is removed in mature form; sequence LVM.

This sequence belongs to the HIPP family.

In terms of biological role, heavy-metal-binding protein. In Arabidopsis thaliana (Mouse-ear cress), this protein is Heavy metal-associated isoprenylated plant protein 47.